The following is a 503-amino-acid chain: NAD(P)H-quinone oxidoreductase chain 4, chloroplastic (503 aa).

14 helical membrane passes run 3-23 (FFPW…IVFF), 37-57 (LCIC…HFQV), 84-104 (GLSV…TLAA), 113-130 (LFHF…GLFA), 134-154 (LFLF…LLSM), 167-187 (FILY…GLTL), 208-228 (ALEI…SPIL), 242-262 (HYST…YGLI), 274-294 (SLFS…AALT), 305-325 (IAYS…SMTD), 330-350 (GALL…FLAG), 385-405 (SLAL…FGII), 416-436 (ILIS…SLSM), and 462-482 (LFLS…PDFV).

Belongs to the complex I subunit 4 family.

It is found in the plastid. The protein resides in the chloroplast thylakoid membrane. It catalyses the reaction a plastoquinone + NADH + (n+1) H(+)(in) = a plastoquinol + NAD(+) + n H(+)(out). The catalysed reaction is a plastoquinone + NADPH + (n+1) H(+)(in) = a plastoquinol + NADP(+) + n H(+)(out). In Ipomoea purpurea (Common morning glory), this protein is NAD(P)H-quinone oxidoreductase chain 4, chloroplastic.